A 459-amino-acid chain; its full sequence is Flavin-containing monooxygenase FMO GS-OX1 (459 aa).

17 to 22 provides a ligand contact to FAD; sequence GAGAAG. 211–216 lines the NADP(+) pocket; that stretch reads GNYASG.

Belongs to the FMO family. FAD serves as cofactor. As to expression, mainly expressed in leaves. Low levels in flowers and seeds.

The enzyme catalyses a (Z)-omega-(methylsulfanyl)-N-sulfo-alkylhydroximate S-glucoside + NADPH + O2 + H(+) = a (Z)-omega-(methylsulfinyl)-alkyl-glucosinolate + NADP(+) + H2O. Functionally, catalyzes the conversion of methylthioalkyl glucosinolates into methylsulfinylalkyl glucosinolates. Able to S-oxygenate both desulfo- and intact 4-methylthiobutyl glucosinolates, but no activity with methionine, dihomomethionine or 5-methylthiopentaldoxime. In Arabidopsis thaliana (Mouse-ear cress), this protein is Flavin-containing monooxygenase FMO GS-OX1 (FMOGS-OX1).